The chain runs to 251 residues: tRNA (guanine-N(7)-)-methyltransferase (251 aa).

The segment at 1-29 (MTQTLSSQDPQAPAAPPMPGAAGSAPADV) is disordered. Residues glutamate 84, glutamate 109, aspartate 136, and aspartate 159 each coordinate S-adenosyl-L-methionine. Residue aspartate 159 is part of the active site. Lysine 163 serves as a coordination point for substrate. The tract at residues 165-170 (RHNKRR) is interaction with RNA. Substrate-binding positions include aspartate 195 and 230–233 (TKFE).

This sequence belongs to the class I-like SAM-binding methyltransferase superfamily. TrmB family.

The enzyme catalyses guanosine(46) in tRNA + S-adenosyl-L-methionine = N(7)-methylguanosine(46) in tRNA + S-adenosyl-L-homocysteine. It functions in the pathway tRNA modification; N(7)-methylguanine-tRNA biosynthesis. Catalyzes the formation of N(7)-methylguanine at position 46 (m7G46) in tRNA. This chain is tRNA (guanine-N(7)-)-methyltransferase, found in Acidovorax sp. (strain JS42).